The sequence spans 501 residues: Glutamyl-tRNA(Gln) amidotransferase subunit A (501 aa).

Residues lysine 80 and serine 155 each act as charge relay system in the active site. Catalysis depends on serine 179, which acts as the Acyl-ester intermediate.

This sequence belongs to the amidase family. GatA subfamily. Heterotrimer of A, B and C subunits.

The catalysed reaction is L-glutamyl-tRNA(Gln) + L-glutamine + ATP + H2O = L-glutaminyl-tRNA(Gln) + L-glutamate + ADP + phosphate + H(+). Functionally, allows the formation of correctly charged Gln-tRNA(Gln) through the transamidation of misacylated Glu-tRNA(Gln) in organisms which lack glutaminyl-tRNA synthetase. The reaction takes place in the presence of glutamine and ATP through an activated gamma-phospho-Glu-tRNA(Gln). This chain is Glutamyl-tRNA(Gln) amidotransferase subunit A, found in Cupriavidus pinatubonensis (strain JMP 134 / LMG 1197) (Cupriavidus necator (strain JMP 134)).